We begin with the raw amino-acid sequence, 325 residues long: MTKSQQKVSSIEKLSNQEGIISALAFDQRGALKRMMAEHQSETPTVEQIEQLKVLVSEELTQYASSILLDPEYGLPASDARNNDCGLLLAYEKTGYDVNAKGRLPDCLVEWSAKRLKEQGANAVKFLLYYDVDDTEEINIQKKAYIERIGSECVAEDIPFFLEVLTYDDNIPDNKSAEFAKVKPRKVNEAMKLFSEDRFNVDVLKVEVPVNMNFVEGFSEGEVVYTKEEAAQHFRDQDAATHLPYIYLSAGVSAELFQDTLKFAHDSGAQFNGVLCGRATWSGAVKVYIEEGEQAAREWLRTVGFKNIDDLNTVLKTTATSWKNK.

The protein belongs to the aldolase LacD family.

The catalysed reaction is D-tagatofuranose 1,6-bisphosphate = D-glyceraldehyde 3-phosphate + dihydroxyacetone phosphate. Its pathway is carbohydrate metabolism; D-tagatose 6-phosphate degradation; D-glyceraldehyde 3-phosphate and glycerone phosphate from D-tagatose 6-phosphate: step 2/2. The sequence is that of Tagatose 1,6-diphosphate aldolase from Staphylococcus epidermidis (strain ATCC 35984 / DSM 28319 / BCRC 17069 / CCUG 31568 / BM 3577 / RP62A).